Consider the following 195-residue polypeptide: ATP-dependent Clp protease proteolytic subunit (195 aa).

S99 (nucleophile) is an active-site residue. H124 is an active-site residue.

The protein belongs to the peptidase S14 family. As to quaternary structure, fourteen ClpP subunits assemble into 2 heptameric rings which stack back to back to give a disk-like structure with a central cavity, resembling the structure of eukaryotic proteasomes.

The protein resides in the cytoplasm. It carries out the reaction Hydrolysis of proteins to small peptides in the presence of ATP and magnesium. alpha-casein is the usual test substrate. In the absence of ATP, only oligopeptides shorter than five residues are hydrolyzed (such as succinyl-Leu-Tyr-|-NHMec, and Leu-Tyr-Leu-|-Tyr-Trp, in which cleavage of the -Tyr-|-Leu- and -Tyr-|-Trp bonds also occurs).. Functionally, cleaves peptides in various proteins in a process that requires ATP hydrolysis. Has a chymotrypsin-like activity. Plays a major role in the degradation of misfolded proteins. This Coxiella burnetii (strain RSA 331 / Henzerling II) protein is ATP-dependent Clp protease proteolytic subunit.